We begin with the raw amino-acid sequence, 705 residues long: Elongation factor G (705 aa).

The 277-residue stretch at 6–282 folds into the tr-type G domain; that stretch reads NKVRNIGIMA…AVVDFLPSPL (277 aa). Residues 15–22, 79–83, and 133–136 contribute to the GTP site; these read AHIDAGKT, DTPGH, and NKMD.

The protein belongs to the TRAFAC class translation factor GTPase superfamily. Classic translation factor GTPase family. EF-G/EF-2 subfamily.

Its subcellular location is the cytoplasm. Functionally, catalyzes the GTP-dependent ribosomal translocation step during translation elongation. During this step, the ribosome changes from the pre-translocational (PRE) to the post-translocational (POST) state as the newly formed A-site-bound peptidyl-tRNA and P-site-bound deacylated tRNA move to the P and E sites, respectively. Catalyzes the coordinated movement of the two tRNA molecules, the mRNA and conformational changes in the ribosome. The sequence is that of Elongation factor G from Corynebacterium glutamicum (strain ATCC 13032 / DSM 20300 / JCM 1318 / BCRC 11384 / CCUG 27702 / LMG 3730 / NBRC 12168 / NCIMB 10025 / NRRL B-2784 / 534).